We begin with the raw amino-acid sequence, 100 residues long: Urease subunit gamma (100 aa).

It belongs to the urease gamma subunit family. Heterotrimer of UreA (gamma), UreB (beta) and UreC (alpha) subunits. Three heterotrimers associate to form the active enzyme.

The protein resides in the cytoplasm. The enzyme catalyses urea + 2 H2O + H(+) = hydrogencarbonate + 2 NH4(+). The protein operates within nitrogen metabolism; urea degradation; CO(2) and NH(3) from urea (urease route): step 1/1. The chain is Urease subunit gamma from Paracidovorax citrulli (strain AAC00-1) (Acidovorax citrulli).